Here is a 92-residue protein sequence, read N- to C-terminus: Small ribosomal subunit protein uS19c (92 aa).

This sequence belongs to the universal ribosomal protein uS19 family.

It is found in the plastid. The protein resides in the chloroplast. Protein S19 forms a complex with S13 that binds strongly to the 16S ribosomal RNA. The sequence is that of Small ribosomal subunit protein uS19c from Chaetosphaeridium globosum (Charophycean green alga).